The sequence spans 215 residues: Pyrrolidone-carboxylate peptidase (215 aa).

Active-site residues include Glu80, Cys143, and His167.

This sequence belongs to the peptidase C15 family. As to quaternary structure, homotetramer.

The protein localises to the cytoplasm. The enzyme catalyses Release of an N-terminal pyroglutamyl group from a polypeptide, the second amino acid generally not being Pro.. Functionally, removes 5-oxoproline from various penultimate amino acid residues except L-proline. This Bacillus cereus (strain AH820) protein is Pyrrolidone-carboxylate peptidase.